Here is a 409-residue protein sequence, read N- to C-terminus: Peptidase T (409 aa).

Histidine 78 is a binding site for Zn(2+). Aspartate 80 is a catalytic residue. Residue aspartate 140 coordinates Zn(2+). Glutamate 173 acts as the Proton acceptor in catalysis. Residues glutamate 174, aspartate 196, and histidine 379 each coordinate Zn(2+).

The protein belongs to the peptidase M20B family. The cofactor is Zn(2+).

It is found in the cytoplasm. The catalysed reaction is Release of the N-terminal residue from a tripeptide.. Its function is as follows. Cleaves the N-terminal amino acid of tripeptides. The sequence is that of Peptidase T from Salmonella paratyphi A (strain ATCC 9150 / SARB42).